A 112-amino-acid polypeptide reads, in one-letter code: Large ribosomal subunit protein uL24 (112 aa).

Belongs to the universal ribosomal protein uL24 family. Part of the 50S ribosomal subunit.

In terms of biological role, one of two assembly initiator proteins, it binds directly to the 5'-end of the 23S rRNA, where it nucleates assembly of the 50S subunit. Its function is as follows. One of the proteins that surrounds the polypeptide exit tunnel on the outside of the subunit. The sequence is that of Large ribosomal subunit protein uL24 from Magnetococcus marinus (strain ATCC BAA-1437 / JCM 17883 / MC-1).